We begin with the raw amino-acid sequence, 213 residues long: Superoxide dismutase [Mn] (213 aa).

Mn(2+) is bound by residues His-27, His-82, Asp-168, and His-172.

Belongs to the iron/manganese superoxide dismutase family. In terms of assembly, homodimer.

The enzyme catalyses 2 superoxide + 2 H(+) = H2O2 + O2. Inhibited by hydrogen peroxide. Destroys superoxide anion radicals which are normally produced within the cells and which are toxic to biological systems. The chain is Superoxide dismutase [Mn] (sodA) from Haemophilus ducreyi (strain 35000HP / ATCC 700724).